We begin with the raw amino-acid sequence, 424 residues long: Histidine--tRNA ligase (424 aa).

It belongs to the class-II aminoacyl-tRNA synthetase family. Homodimer.

It is found in the cytoplasm. It catalyses the reaction tRNA(His) + L-histidine + ATP = L-histidyl-tRNA(His) + AMP + diphosphate + H(+). This Protochlamydia amoebophila (strain UWE25) protein is Histidine--tRNA ligase.